A 291-amino-acid polypeptide reads, in one-letter code: MTLLLELAHGLPWLYFSLVFLFSLMIGSFLNVVIHRLPIMLEREWQAEYRSYFSSDTPQPEDDERYNLMVPRSCCPRCNHPITALENIPLLSWLWLKGRCRGCQAAISARYPLVELLTALLSVVVAMTLTPGWGTLAALLLTWVLVALTFIDLDKMLLPDQLTLPLLWGGLLFNLLGGYVPLGDAVIGAMAGYLVLWSLYWAFKLLTGKEGMGYGDFKLLAALGAWLGWQALPIVLLLSSLVGAIFGIGLILLRNHHQSKPIPFGPYLAIAGWIALLWGDSITRWYLSTIL.

A helical membrane pass occupies residues 14 to 34; it reads LYFSLVFLFSLMIGSFLNVVI. Residues Cys-75, Cys-78, Cys-100, and Cys-103 each contribute to the Zn(2+) site. The next 6 membrane-spanning stretches (helical) occupy residues 107–127, 131–151, 162–182, 186–206, 232–252, and 262–282; these read ISAR…VVAM, PGWG…LTFI, LTLP…YVPL, VIGA…FKLL, LPIV…GLIL, and IPFG…GDSI.

This sequence belongs to the peptidase A24 family. The cofactor is Zn(2+).

The protein localises to the cell inner membrane. The enzyme catalyses Typically cleaves a -Gly-|-Phe- bond to release an N-terminal, basic peptide of 5-8 residues from type IV prepilin, and then N-methylates the new N-terminal amino group, the methyl donor being S-adenosyl-L-methionine.. In terms of biological role, plays an essential role in type IV pili and type II pseudopili formation by proteolytically removing the leader sequence from substrate proteins and subsequently monomethylating the alpha-amino group of the newly exposed N-terminal phenylalanine. This chain is Prepilin leader peptidase/N-methyltransferase (tapD), found in Aeromonas salmonicida (strain A449).